The primary structure comprises 245 residues: Orotidine 5'-phosphate decarboxylase (245 aa).

Residues Asp-22, Lys-44, 71–80, Thr-131, Arg-192, Gln-201, Gly-221, and Arg-222 contribute to the substrate site; that span reads DLKFHDIPNT. The Proton donor role is filled by Lys-73.

This sequence belongs to the OMP decarboxylase family. Type 1 subfamily. Homodimer.

It catalyses the reaction orotidine 5'-phosphate + H(+) = UMP + CO2. The protein operates within pyrimidine metabolism; UMP biosynthesis via de novo pathway; UMP from orotate: step 2/2. In terms of biological role, catalyzes the decarboxylation of orotidine 5'-monophosphate (OMP) to uridine 5'-monophosphate (UMP). The protein is Orotidine 5'-phosphate decarboxylase of Salmonella gallinarum (strain 287/91 / NCTC 13346).